Consider the following 360-residue polypeptide: Phenylalanine--tRNA ligase alpha subunit (360 aa).

Residue Glu-260 coordinates Mg(2+).

It belongs to the class-II aminoacyl-tRNA synthetase family. Phe-tRNA synthetase alpha subunit type 1 subfamily. In terms of assembly, tetramer of two alpha and two beta subunits. Requires Mg(2+) as cofactor.

It localises to the cytoplasm. It catalyses the reaction tRNA(Phe) + L-phenylalanine + ATP = L-phenylalanyl-tRNA(Phe) + AMP + diphosphate + H(+). The chain is Phenylalanine--tRNA ligase alpha subunit from Rhodopseudomonas palustris (strain BisB5).